The sequence spans 226 residues: Cytidylate kinase (226 aa).

Gly10–Thr18 lines the ATP pocket.

It belongs to the cytidylate kinase family. Type 1 subfamily.

The protein localises to the cytoplasm. It carries out the reaction CMP + ATP = CDP + ADP. The enzyme catalyses dCMP + ATP = dCDP + ADP. The polypeptide is Cytidylate kinase (Streptococcus pyogenes serotype M18 (strain MGAS8232)).